The primary structure comprises 625 residues: Phosphomethylpyrimidine synthase (625 aa).

Residues Asn-230, Met-259, Tyr-288, His-324, 344–346 (SRG), 385–388 (DGLR), and Glu-424 each bind substrate. Position 428 (His-428) interacts with Zn(2+). Tyr-451 is a substrate binding site. Residue His-492 coordinates Zn(2+). 3 residues coordinate [4Fe-4S] cluster: Cys-572, Cys-575, and Cys-580.

It belongs to the ThiC family. Homodimer. It depends on [4Fe-4S] cluster as a cofactor.

The catalysed reaction is 5-amino-1-(5-phospho-beta-D-ribosyl)imidazole + S-adenosyl-L-methionine = 4-amino-2-methyl-5-(phosphooxymethyl)pyrimidine + CO + 5'-deoxyadenosine + formate + L-methionine + 3 H(+). It functions in the pathway cofactor biosynthesis; thiamine diphosphate biosynthesis. Its function is as follows. Catalyzes the synthesis of the hydroxymethylpyrimidine phosphate (HMP-P) moiety of thiamine from aminoimidazole ribotide (AIR) in a radical S-adenosyl-L-methionine (SAM)-dependent reaction. This is Phosphomethylpyrimidine synthase from Xanthomonas euvesicatoria pv. vesicatoria (strain 85-10) (Xanthomonas campestris pv. vesicatoria).